Reading from the N-terminus, the 770-residue chain is ARF GTPase-activating protein GIT1 (770 aa).

The Arf-GAP domain maps to 1 to 124 (MSRKGPRAEV…AFVHKLPCRD (124 aa)). Positions 1–124 (MSRKGPRAEV…AFVHKLPCRD (124 aa)) are interaction with gamma-tubulin and localization to the centrosome. A C4-type zinc finger spans residues 11 to 34 (CADCSAPDPGWASISRGVLVCDEC). 3 ANK repeats span residues 132–161 (DLSK…QANF), 166–195 (KGTT…DPGS), and 199–228 (NGRT…ELTD). Position 224 is a phosphotyrosine (Tyr224). Residues 245–374 (HYIIPQMADR…QGKSLSSPTD (130 aa)) form an interaction with PCLO region. Residues 253 to 424 (DRSRQKCMSQ…NRARSMDSSD (172 aa)) are interaction with PTK2/FAK1. Residues 254-376 (RSRQKCMSQS…KSLSSPTDNL (123 aa)) are interaction with ARHGEF7. The segment at 363 to 425 (RQQGKSLSSP…RARSMDSSDL (63 aa)) is disordered. Positions 366–383 (GKSLSSPTDNLELSARSQ) are enriched in polar residues. Ser368 and Ser371 each carry phosphoserine. Phosphothreonine is present on Thr373. The interval 375 to 596 (NLELSARSQS…QEGSRHASKL (222 aa)) is interaction with NCK2 and GRIN3A. Positions 375–596 (NLELSARSQS…QEGSRHASKL (222 aa)) are required for localization at synapses. Phosphoserine occurs at positions 379 and 384. Tyr392 carries the post-translational modification Phosphotyrosine. Ser394 and Ser397 each carry phosphoserine. The span at 394–403 (SVASDEDTDQ) shows a compositional bias: acidic residues. The residue at position 401 (Thr401) is a Phosphothreonine. A phosphoserine mark is found at Ser419, Ser422, and Ser426. An interaction with MAPK1 region spans residues 420 to 475 (MDSSDLSDGAVTLQEYLELKKALATSEAKVQQLMKVNSSLSDELRRLQREIHKLQA). The segment at 429–629 (AVTLQEYLEL…EGKRFLELSK (201 aa)) is interaction with IKBKG. Residues 449–483 (VQQLMKVNSSLSDELRRLQREIHKLQAENLQLRQP) are a coiled coil. Ser507 and Ser545 each carry phosphoserine. Thr546 bears the Phosphothreonine mark. Phosphotyrosine occurs at positions 554 and 563. Phosphoserine is present on residues Ser570, Ser580, Ser601, and Ser605. Positions 578–588 (PSSPLLSCSQE) are enriched in polar residues. A disordered region spans residues 578–615 (PSSPLLSCSQEGSRHASKLSRHGSGADSDYENTQSGDP). The residue at position 610 (Thr610) is a Phosphothreonine. A Phosphoserine modification is found at Ser639. The segment at 646-770 (PGLPSTEDVI…VTITTREKKQ (125 aa)) is interaction with PXN and TGFB1I1.

In terms of assembly, forms homodimers and possibly oligomers. May forms heterooligomers with GIT2. Interacts with G protein-coupled receptor kinases, including GRK2, GRK3, GRK5 and GRK6. Interacts with PPFIA1, PPFIA2 and PPFIA4. Interacts with GRIP1 and forms a ternary complex with PPFIA1 and GRIP1. Directly interacts with ARHGEF7/beta-PIX, forming in vitro a heptameric complex made of a GIT1 dimer and an ARHGEF7 trimer. Directly interacts with PXN/paxillin; this interaction is enhanced in the presence of ARHGEF7. Directly interacts (via C-terminus) with TGFB1I1/Hic-5 (via LD motif 3). Directly interacts with PTK2/FAK1. May interact with PTK2B/PYK2; this interaction may be indirect. Interacts with AMPA receptors GRIA2/3. Directly interacts with protein Piccolo/PCLO. Forms a complex with Ephrin-B1/EFNB1 and NCK2/GRB4 (via SH2); this interaction is important for spine morphogenesis and synapse formation. Interaction with NCK2 is transient and depends upon GIT1 phosphorylation at Tyr-392. Interacts with GRIN3A/GluN3A (via C-terminus); this interaction competes with GIT1 interaction with ARHGEF7 and limits synaptic localization of GIT1. Interacts with IKBKG/NEMO in resting bone mesenchymal stem cells, as well as in TNF-stimulated cells; this interaction may increase IKBKG affinity for 'Lys-63'-linked polyubiquitin chains. Interacts with GABA(A) receptors, including GABRB3 and GABRG2. Interacts with SCRIB. Interacts (via N- and C-terminus) with ENTR1/SDCCAG3 (via N-terminus); this interaction is direct. May form a tripartite complex with ENTR1 and PTPN13. Interacts with YWHAZ. Interacts with PAK1. Interacts with PAK3. Directly interacts (via N-terminus) with gamma-tubulin. Interacts with MAPK1 and MAPK3; this interaction is required for MAPK1/3 recruitment to focal adhesions. Post-translationally, phosphorylated on tyrosine residues by PTK2/FAK1 and SRC in growing fibroblasts. Phosphorylation at Tyr-392 is induced by activation of Ephrin-B1/EFNB1 and catalyzed by SRC family kinases. It is required for the interaction with NCK2 and for GIT1 recruitment to synapses in hippocampal neurons. Expressed in the brain (at protein level). Also expressed at high levels in lung and heart. In lung, expressed in endothelial cells, especially in capillaries; also expressed in smooth muscle and epithelial cells of bronchi (at protein level). Expressed in bone marrow mesenchymal stem cells, as well as in osteoclasts and bone marrow-derived macrophages (at protein level).

It localises to the cytoplasm. The protein localises to the presynapse. It is found in the postsynapse. The protein resides in the postsynaptic density. Its subcellular location is the cell junction. It localises to the focal adhesion. The protein localises to the cell projection. It is found in the lamellipodium. The protein resides in the cytoskeleton. Its subcellular location is the microtubule organizing center. It localises to the centrosome. The protein localises to the spindle pole. In terms of biological role, GTPase-activating protein for ADP ribosylation factor family members, including ARF1. Multidomain scaffold protein that interacts with numerous proteins and therefore participates in many cellular functions, including receptor internalization, focal adhesion remodeling, and signaling by both G protein-coupled receptors and tyrosine kinase receptors. Through PAK1 activation, positively regulates microtubule nucleation during interphase. Plays a role in the regulation of cytokinesis; for this function, may act in a pathway also involving ENTR1 and PTPN13. May promote cell motility both by regulating focal complex dynamics and by the activation of RAC1. May act as scaffold for MAPK1/3 signal transduction, recruiting MAPK1/3 to focal adhesions after EGF stimulation via a Src-dependent pathway, hence stimulating cell migration. Plays a role in brain development and function. Involved in the regulation of spine density and synaptic plasticity that is required for processes involved in learning. Plays an important role in dendritic spine morphogenesis and synapse formation. In hippocampal neurons, recruits guanine nucleotide exchange factors (GEFs), such as ARHGEF7/beta-PIX, to the synaptic membrane. These in turn locally activate RAC1, which is an essential step for spine morphogenesis and synapse formation. May contribute to the organization of presynaptic active zones through oligomerization and formation of a Piccolo/PCLO-based protein network, which includes ARHGEF7/beta-PIX and FAK1. In neurons, through its interaction with liprin-alpha family members, may be required for AMPA receptor (GRIA2/3) proper targeting to the cell membrane. In complex with GABA(A) receptors and ARHGEF7, plays a crucial role in regulating GABA(A) receptor synaptic stability, maintaining GPHN/gephyrin scaffolds and hence GABAergic inhibitory synaptic transmission, by locally coordinating RAC1 and PAK1 downstream effector activity, leading to F-actin stabilization. May also be important for RAC1 downstream signaling pathway through PAK3 and regulation of neuronal inhibitory transmission at presynaptic input. Required for successful bone regeneration during fracture healing. The function in intramembranous ossification may, at least partly, exerted by macrophages in which GIT1 is a key negative regulator of redox homeostasis, IL1B production, and glycolysis, acting through the ERK1/2/NRF2/NFE2L2 axis. May play a role in angiogenesis during fracture healing. In this process, may regulate activation of the canonical NF-kappa-B signal in bone mesenchymal stem cells by enhancing the interaction between NEMO and 'Lys-63'-ubiquitinated RIPK1/RIP1, eventually leading to enhanced production of VEGFA and others angiogenic factors. Essential for VEGF signaling through the activation of phospholipase C-gamma and ERK1/2, hence may control endothelial cell proliferation and angiogenesis. This chain is ARF GTPase-activating protein GIT1 (Git1), found in Mus musculus (Mouse).